The following is a 117-amino-acid chain: MTVNLHDSAYDLEQALRQSEEYSRLKNLYDEVNGDPSAKKMFDNFRDIQLNLQQKQMNGEDITQEEVEQAQKSVALVQQHEKISQLMEAEQRMSMLIADLNKIIMKPLEELYGNPES.

It belongs to the UPF0342 family.

The sequence is that of UPF0342 protein BLi01058/BL02870 from Bacillus licheniformis (strain ATCC 14580 / DSM 13 / JCM 2505 / CCUG 7422 / NBRC 12200 / NCIMB 9375 / NCTC 10341 / NRRL NRS-1264 / Gibson 46).